The primary structure comprises 218 residues: Protein P9 (218 aa).

The protein resides in the virion membrane. The polypeptide is Protein P9 (IX) (Pseudoalteromonas espejiana (Bacteriophage PM2)).